A 253-amino-acid polypeptide reads, in one-letter code: uncharacterized protein (253 aa).

Residues 211–235 (DEPEPAQPTLTVPSAQPVSNRRGKP) form a disordered region. The segment covering 218 to 229 (PTLTVPSAQPVS) has biased composition (polar residues).

This is an uncharacterized protein from Mycobacterium tuberculosis (strain CDC 1551 / Oshkosh).